The chain runs to 79 residues: MNTKLVVVFLLSAILFVSVTASRPGKDLERDEAYETYDDENKRACKDVFPAATCRHAKSVGNCSSEKYKRNCAITCGAC.

An N-terminal signal peptide occupies residues 1 to 21; the sequence is MNTKLVVVFLLSAILFVSVTA. Residues 22 to 43 constitute a propeptide that is removed on maturation; the sequence is SRPGKDLERDEAYETYDDENKR. Residues 45–79 form the ShKT domain; the sequence is CKDVFPAATCRHAKSVGNCSSEKYKRNCAITCGAC. Intrachain disulfides connect Cys-45/Cys-79, Cys-54/Cys-72, and Cys-63/Cys-76. Residues 67–68 are crucial for binding to potassium channels; it reads KY.

Belongs to the sea anemone type 1 potassium channel toxin family. Type 1b subfamily. Two similar peptides (OspTx2a-p1 and -p2) are obtained after synthesis and oxidative folding. They may differ by a D-Cys at position 76 (corresponding to OspTx2a-p2). Since C-terminal Cys residues are prone to racemization during solid-phase peptide synthesis, and if the presence of a D-amino acid is correct, it is probable that OspTx2a-p1 (L-Cys-76 form) corresponds to the native peptide.

The protein localises to the secreted. Functionally, toxin that weakly blocks the two voltage-gated potassium channels on Kv1.2/KCNA2 (IC(50)=1.8-2.5 uM) and Kv1.6/KCNA6 (IC(50)=5.6-6.2 uM). This chain is U-actitoxin-Oulsp1, found in Oulactis sp. (Sea anemone).